Reading from the N-terminus, the 492-residue chain is GPI alpha-1,6-mannosyltransferase 2 (492 aa).

Over 1-13 (MGLLDPSQKEVLK) the chain is Cytoplasmic. A helical membrane pass occupies residues 14–34 (FAVSCRILTLVLQALFNIIIP). The Lumenal segment spans residues 35–77 (DHHADAFSPPRLAPSGSVDQLVEALLGGLSRWDAEHFLFIAEH). A helical membrane pass occupies residues 78–98 (GYLYEHNFAFFPGFPLALLMG). Topologically, residues 99–113 (TELLRPLQGLLSERS) are cytoplasmic. Residues 114 to 134 (CLLVSVALLNSLFSVLAAVAL) traverse the membrane as a helical segment. Topologically, residues 135–136 (HD) are lumenal. The helical transmembrane segment at 137-157 (LGCLVLHCPRQAFCAALLFCL) threads the bilayer. Topologically, residues 158-161 (SPAN) are cytoplasmic. Residues 162–182 (VFLAAGYSEALFAFLTFSAMG) form a helical membrane-spanning segment. Topologically, residues 183–192 (QLERGRGWAS) are lumenal. The chain crosses the membrane as a helical span at residues 193-213 (GLLFALAAGVRSNGLVSVGFL). The Cytoplasmic portion of the chain corresponds to 214–234 (LHSQCRGFCSSLVVLDPLKGL). A helical membrane pass occupies residues 235–255 (VKLMASLCLSVLTVSLPFALF). Topologically, residues 256-327 (QYYAYTQFCF…RYYELRQVPN (72 aa)) are lumenal. Residues 328–348 (FLLATPVTVLVVWATWTYVTA) traverse the membrane as a helical segment. Residues 349-378 (HPWLCLTLGLQRTKDRESLEKPHPGFLSAK) lie on the Cytoplasmic side of the membrane. The helical transmembrane segment at 379–399 (VFVYLVHAAALLAFGGLCMHV) threads the bilayer. The Lumenal portion of the chain corresponds to 400–468 (QVLTRLLGSS…NWKTCSPVTK (69 aa)). Residues 469 to 489 (CILVYFLTYWLLGLIMHCNFL) traverse the membrane as a helical segment. Residues 490–492 (PWT) are Cytoplasmic-facing.

Belongs to the PIGV family. Post-translationally, not N-glycosylated.

Its subcellular location is the endoplasmic reticulum membrane. It functions in the pathway glycolipid biosynthesis; glycosylphosphatidylinositol-anchor biosynthesis. Its function is as follows. Alpha-1,6-mannosyltransferase that catalyzes the transfer of the second mannose, via an alpha-1,6 bond, from a dolichol-phosphate-mannose (Dol-P-Man) to the alpha-D-Man-(1-&gt;4)-alpha-D-GlcN-(1-&gt;6)-(1-radyl,2-acyl-sn-glycero-3-phospho)-2-acyl-inositol (also termed H2) intermediate to generate an alpha-D-Man-(1-&gt;6)-alpha-D-Man-(1-&gt;4)-alpha-D-GlcN-(1-&gt;6)-(1-radyl,2-acyl-sn-glycero-3-phospho)-2-acyl-inositol (also termed H3) and participates in the seventh step of the glycosylphosphatidylinositol-anchor biosynthesis. Also transfers the second mannose on a 2-PEtn-alpha-D-Man-(1-&gt;4)-alpha-D-GlcN-(1-&gt;6)-(1-radyl,2-acyl-sn-glycero-3-phospho)-2-acyl-inositol (also termed H5). The chain is GPI alpha-1,6-mannosyltransferase 2 from Rattus norvegicus (Rat).